Here is a 284-residue protein sequence, read N- to C-terminus: Serine/arginine-rich splicing factor RS2Z32 (284 aa).

In terms of domain architecture, RRM spans 11-81; the sequence is TRLYVGRLSS…SRITVEASRG (71 aa). The disordered stretch occupies residues 74 to 97; it reads ITVEASRGAPRGSRDNGSRGPPPG. 2 consecutive CCHC-type zinc fingers follow at residues 99-116 and 121-138; these read GRCF…DCTA and NKCY…NCKN. Residues 132–284 form a disordered region; it reads IERNCKNSPS…RPSPKGSESP (153 aa). Residues 159-180 show a composition bias toward basic residues; that stretch reads RSPRRRRSPSRSRSYSRGRSYS. A phosphoserine mark is found at serine 166, serine 168, and serine 184. Positions 186 to 203 are enriched in basic and acidic residues; that stretch reads VRREKSVEDRSRSPKAME. A phosphoserine mark is found at serine 205, serine 207, serine 214, serine 216, serine 225, serine 235, serine 255, serine 265, serine 277, and serine 281. Residues 209–236 show a composition bias toward basic and acidic residues; sequence KGRDQSLSPDRKVIDASPKRGSDYDGSP.

This sequence belongs to the splicing factor SR family. RS2Z subfamily. In terms of assembly, component of the spliceosome. Extensively phosphorylated on serine residues in the RS domain.

It localises to the nucleus. In terms of biological role, probably involved in intron recognition and spliceosome assembly. In Arabidopsis thaliana (Mouse-ear cress), this protein is Serine/arginine-rich splicing factor RS2Z32 (RS2Z32).